The sequence spans 133 residues: uncharacterized protein (133 aa).

This is an uncharacterized protein from Saccharomyces cerevisiae (strain ATCC 204508 / S288c) (Baker's yeast).